The primary structure comprises 264 residues: Elongation factor Ts (264 aa).

Positions 76-79 (TDFV) are involved in Mg(2+) ion dislocation from EF-Tu.

It belongs to the EF-Ts family.

The protein resides in the cytoplasm. Its function is as follows. Associates with the EF-Tu.GDP complex and induces the exchange of GDP to GTP. It remains bound to the aminoacyl-tRNA.EF-Tu.GTP complex up to the GTP hydrolysis stage on the ribosome. This Deinococcus deserti (strain DSM 17065 / CIP 109153 / LMG 22923 / VCD115) protein is Elongation factor Ts.